Here is a 97-residue protein sequence, read N- to C-terminus: DNA/RNA-binding protein Alba (97 aa).

Lysine 15 carries the N6-acetyllysine modification.

The protein belongs to the histone-like Alba family. Post-translationally, acetylated. Acetylation at Lys-15 decreases DNA-binding affinity.

It localises to the cytoplasm. It is found in the chromosome. In terms of biological role, binds double-stranded DNA tightly but without sequence specificity. Involved in DNA compaction. This chain is DNA/RNA-binding protein Alba, found in Sulfolobus acidocaldarius (strain ATCC 33909 / DSM 639 / JCM 8929 / NBRC 15157 / NCIMB 11770).